Reading from the N-terminus, the 59-residue chain is Large ribosomal subunit protein uL30 (59 aa).

It belongs to the universal ribosomal protein uL30 family. In terms of assembly, part of the 50S ribosomal subunit.

The sequence is that of Large ribosomal subunit protein uL30 from Desulforamulus reducens (strain ATCC BAA-1160 / DSM 100696 / MI-1) (Desulfotomaculum reducens).